The primary structure comprises 508 residues: Photosystem II CP47 reaction center protein (508 aa).

The next 6 helical transmembrane spans lie at 21–36 (SVHI…WAGS), 101–115 (IVFS…IWHW), 140–156 (GIHL…FGAF), 203–218 (IAAG…FHLS), 237–252 (VLSS…AFVV), and 457–472 (SFAL…HGAR).

This sequence belongs to the PsbB/PsbC family. PsbB subfamily. As to quaternary structure, PSII is composed of 1 copy each of membrane proteins PsbA, PsbB, PsbC, PsbD, PsbE, PsbF, PsbH, PsbI, PsbJ, PsbK, PsbL, PsbM, PsbT, PsbX, PsbY, PsbZ, Psb30/Ycf12, at least 3 peripheral proteins of the oxygen-evolving complex and a large number of cofactors. It forms dimeric complexes. Binds multiple chlorophylls. PSII binds additional chlorophylls, carotenoids and specific lipids. serves as cofactor.

It localises to the plastid. The protein resides in the chloroplast thylakoid membrane. In terms of biological role, one of the components of the core complex of photosystem II (PSII). It binds chlorophyll and helps catalyze the primary light-induced photochemical processes of PSII. PSII is a light-driven water:plastoquinone oxidoreductase, using light energy to abstract electrons from H(2)O, generating O(2) and a proton gradient subsequently used for ATP formation. The protein is Photosystem II CP47 reaction center protein of Olimarabidopsis pumila (Dwarf rocket).